The chain runs to 785 residues: MLKVTTSRPWVCSRCVRRQVQSRRRLATASTQYRESRPVPVDNSAPGAKRDDRTLRQIFDSPNFWAEFSQSSKQSYNRPAVGLFQNRYLVNPQGFEVFANTSLRKAQRIVDKVLSASTVEEYRHVARELDRLSDLLCRVIDLSDFVRATHPNAAIQAAASRAYAKMFEYMNILNTTTGLDKQLEIAMATPEIVAGWTEEEVVVADILRKDFAKSAIDLPRAQRERFVALSQEISEIGPEFVDYMTPAKPYLTFESSKLKGMDPVLVRQYTTWGQTKIPTIGGAAAAAIRSVQNEDVRKEIFMATRTASRNTVYKLEELMRKRAELAKLSRYESYSHLALGDKMAKSPASVSQFLEALSKDNNQIVEGEVSELLKFKMSNSHGSSPGLQPWDKDYYMSQILASVRSHSRNSDFLSAYFSLGTVMQGLSRLFTRLYGVRLAPHETMPGETWNSDVRRLDVISETDGHVAVLYCDLFSRPGKSPNPAHFTLRCSREITTPELEEASSLSQNGLFKTNEEAANDGMATSRASGVLKQLPTIALICDFVTMSGKSSRPALLSFNEVQTLFHEMGHAIHSILGRTSLQNVSGTRCATDFAELPSVLMEHFAADPSVLSLFARHYETDQPLPYEMVAEKLALDKRFEGSDTENQIILSMLDLAYHSDLPLSPSFSSTQIYHSLQQKHGALPVDPPGTCWQGFFGHLFGYGSTYYSYLFDRVLARRIWQVVFKDGEAGGSIQRDNGEKMKEEVLKWGGGRDPWKCLAGVLDDGRVENGDEKAMAIVGSWGVKE.

A mitochondrion-targeting transit peptide spans 1–26 (MLKVTTSRPWVCSRCVRRQVQSRRRL). Positions 26-51 (LATASTQYRESRPVPVDNSAPGAKRD) are disordered. His-566 contacts Zn(2+). The active site involves Glu-567. Residues His-570 and His-573 each coordinate Zn(2+).

The protein belongs to the peptidase M3 family. Requires Zn(2+) as cofactor.

Its subcellular location is the mitochondrion matrix. The catalysed reaction is Release of an N-terminal octapeptide as second stage of processing of some proteins imported into the mitochondrion.. Functionally, cleaves proteins, imported into the mitochondrion, to their mature size. While most mitochondrial precursor proteins are processed to the mature form in one step by mitochondrial processing peptidase (MPP), the sequential cleavage by MIP of an octapeptide after initial processing by MPP is a required step for a subgroup of nuclear-encoded precursor proteins destined for the matrix or the inner membrane. This chain is Mitochondrial intermediate peptidase (oct1), found in Botryotinia fuckeliana (strain B05.10) (Noble rot fungus).